The primary structure comprises 270 residues: Putative envelope-preserving system protein Rv2743c (270 aa).

The next 2 membrane-spanning stretches (helical) occupy residues 50 to 72 and 77 to 99; these read ALRW…ALLA and FTSL…TLLL.

As to quaternary structure, interacts with PspA and Rv2742c.

It localises to the membrane. In terms of biological role, involved in preservation of envelope integrity and tolerance to surface stress. Reverses the inhibitory effect of PspA on ClgR activity. Facilitates intracellular growth of M.tuberculosis. In Mycobacterium tuberculosis (strain ATCC 25618 / H37Rv), this protein is Putative envelope-preserving system protein Rv2743c.